Consider the following 216-residue polypeptide: MQAYNTQKGIVCPLDRANVDTDQIIAKQFLKSIKRTGFGVNLFDDWRYLDEGYPGQDNSTRIINPDFILNKPRYQGASILLARRNFGCGSSREHAPWALSEYGFRTVIAPSFADIFYNNCFKNGMLPIVLDEEIVDSLMKATFANEGYELTADLERQVVITPTGEEYAFEVDDFRKHCLLNGLDDIGLTLQQSDAIKDYEQKMMQKTPWIFNEVRA.

It belongs to the LeuD family. LeuD type 1 subfamily. As to quaternary structure, heterodimer of LeuC and LeuD.

It carries out the reaction (2R,3S)-3-isopropylmalate = (2S)-2-isopropylmalate. It participates in amino-acid biosynthesis; L-leucine biosynthesis; L-leucine from 3-methyl-2-oxobutanoate: step 2/4. Catalyzes the isomerization between 2-isopropylmalate and 3-isopropylmalate, via the formation of 2-isopropylmaleate. The sequence is that of 3-isopropylmalate dehydratase small subunit from Psychrobacter arcticus (strain DSM 17307 / VKM B-2377 / 273-4).